We begin with the raw amino-acid sequence, 197 residues long: Ribonuclease HII (197 aa).

One can recognise an RNase H type-2 domain in the interval 9–197 (ELIAGVDEVG…APVKKALEQF (189 aa)). Residues Asp15, Glu16, and Asp107 each contribute to the a divalent metal cation site.

The protein belongs to the RNase HII family. Requires Mn(2+) as cofactor. Mg(2+) serves as cofactor.

Its subcellular location is the cytoplasm. The catalysed reaction is Endonucleolytic cleavage to 5'-phosphomonoester.. Endonuclease that specifically degrades the RNA of RNA-DNA hybrids. In Haemophilus influenzae (strain PittGG), this protein is Ribonuclease HII.